The chain runs to 341 residues: TERF1-interacting nuclear factor 2 (341 aa).

Alanine 2 carries the N-acetylalanine modification. The short motif at 243–265 (HRFNLAPLGKRKSRSHWTSAKAC) is the TBM element. A Nuclear localization signal motif is present at residues 249-255 (PLGKRKS). Residues 283–341 (PAQDLSNPKSREEPGAASAASVGTEPVCTEEAKTPSRPLGKRALEETPPDSPAASRRTV) are disordered.

Monomer. Found in a complex with POT1; TERF1 and TNKS1. Component of the shelterin complex (telosome) composed of TERF1, TERF2, TINF2, TERF2IP, ACD and POT1. Interacts with TERF1.

It localises to the nucleus. The protein resides in the chromosome. Its subcellular location is the telomere. Functionally, component of the shelterin complex (telosome) that is involved in the regulation of telomere length and protection. Shelterin associates with arrays of double-stranded TTAGGG repeats added by telomerase and protects chromosome ends; without its protective activity, telomeres are no longer hidden from the DNA damage surveillance and chromosome ends are inappropriately processed by DNA repair pathways. Plays a role in shelterin complex assembly. The protein is TERF1-interacting nuclear factor 2 (Tinf2) of Mus musculus (Mouse).